We begin with the raw amino-acid sequence, 495 residues long: Autoinducer 2 import ATP-binding protein LsrA (495 aa).

2 consecutive ABC transporter domains span residues 5–233 (IEAH…TPVS) and 256–494 (AQDF…FGGQ). 37 to 44 (GGNGAGKS) contacts ATP.

The protein belongs to the ABC transporter superfamily. AI-2 autoinducer porter (TC 3.A.1.2.8) family. The complex is composed of two ATP-binding proteins (LsrA), two transmembrane proteins (LsrC and LsrD) and a solute-binding protein (LsrB).

Its subcellular location is the cell inner membrane. The enzyme catalyses ATP + H2O + (2R,4S)-2-methyl-2,3,3,4-tetrahydroxytetrahydrofuran-[AI-2-binding protein]Side 1 = ADP + phosphate + (2R,4S)-2-methyl-2,3,3,4-tetrahydroxytetrahydrofuranSide 2 + [AI-2-binding protein]Side 1.. In terms of biological role, part of the ABC transporter complex LsrABCD involved in autoinducer 2 (AI-2) import. Responsible for energy coupling to the transport system. This Enterobacter sp. (strain 638) protein is Autoinducer 2 import ATP-binding protein LsrA (lsrA).